The following is a 338-amino-acid chain: MKLDTVKIKGLFSRVLNNKMDGTDKADIQTYIKKVFGDGGTTPDPSMLHQFNNLVVEQADEIAKPKVTQLLSLLANVQQEKRGNIKEIKIPKKNKAKVIWSATGSGVDLVRVEGQETVPAVPKTMSTGFYYEPLDLVTDSIVYFNKLVNDIADAKVRLYLDKIHQLTASAITAGKIPAKNVQTGSNLTLQQYNKVASVLQRYGGKPIFVADTLLIDYFAFQQGTDSTFKNFLTEEVKGELLTALNPTTIGRTTAVNLTNPFTDDTNSKVELPVNKGYMFAGGVSQKPFSVVEYGGLRQLTEQDIEDERIKMKIVQDASVNLLFGEAIGIIEEQAAVSI.

This chain is SPbeta prophage-derived uncharacterized protein YonB (yonB), found in Bacillus subtilis (strain 168).